The sequence spans 229 residues: Large ribosomal subunit protein uL1 (229 aa).

It belongs to the universal ribosomal protein uL1 family. In terms of assembly, part of the 50S ribosomal subunit.

Its function is as follows. Binds directly to 23S rRNA. The L1 stalk is quite mobile in the ribosome, and is involved in E site tRNA release. Functionally, protein L1 is also a translational repressor protein, it controls the translation of the L11 operon by binding to its mRNA. This is Large ribosomal subunit protein uL1 from Flavobacterium psychrophilum (strain ATCC 49511 / DSM 21280 / CIP 103535 / JIP02/86).